We begin with the raw amino-acid sequence, 131 residues long: Putative pre-16S rRNA nuclease (131 aa).

It belongs to the YqgF nuclease family.

The protein localises to the cytoplasm. Could be a nuclease involved in processing of the 5'-end of pre-16S rRNA. The protein is Putative pre-16S rRNA nuclease of Bordetella petrii (strain ATCC BAA-461 / DSM 12804 / CCUG 43448).